The chain runs to 462 residues: Cysteine--tRNA ligase (462 aa).

A Zn(2+)-binding site is contributed by C30. A 'HIGH' region motif is present at residues 32–42 (MTVYDYCHIGH). 3 residues coordinate Zn(2+): C214, H239, and E243. The short motif at 271–275 (KMSKS) is the 'KMSKS' region element. K274 is an ATP binding site.

Belongs to the class-I aminoacyl-tRNA synthetase family. As to quaternary structure, monomer. Requires Zn(2+) as cofactor.

It is found in the cytoplasm. It catalyses the reaction tRNA(Cys) + L-cysteine + ATP = L-cysteinyl-tRNA(Cys) + AMP + diphosphate. This Herminiimonas arsenicoxydans protein is Cysteine--tRNA ligase.